Reading from the N-terminus, the 105-residue chain is Thioredoxin (105 aa).

One can recognise a Thioredoxin domain in the interval 2 to 105; it reads VKQIESKYAF…KLEATINELI (104 aa). K3 is modified (N6-acetyllysine). K8 is subject to N6-succinyllysine. Active-site nucleophile residues include C32 and C35. The cysteines at positions 32 and 35 are disulfide-linked. Position 39 is an N6-acetyllysine (K39). 2 positions are modified to S-nitrosocysteine: C62 and C69. C73 is subject to S-nitrosocysteine; alternate. K94 carries the N6-acetyllysine; alternate modification. K94 is subject to N6-succinyllysine; alternate.

Belongs to the thioredoxin family. In terms of assembly, homodimer; disulfide-linked. Interacts with TXNIP through the redox-active site. Interacts with MAP3K5 and CASP3. Interacts with APEX1; the interaction stimulates the FOS/JUN AP-1 DNA-binding activity in a redox-dependent manner. In the fully reduced protein, both Cys-69 and Cys-73 are nitrosylated in response to nitric oxide (NO). When two disulfide bonds are present in the protein, only Cys-73 is nitrosylated. Cys-73 can serve as donor for nitrosylation of target proteins. As to expression, erythrocytes.

The protein localises to the nucleus. It is found in the cytoplasm. It localises to the secreted. Its function is as follows. Participates in various redox reactions through the reversible oxidation of its active center dithiol to a disulfide and catalyzes dithiol-disulfide exchange reactions. Plays a role in the reversible S-nitrosylation of cysteine residues in target proteins, and thereby contributes to the response to intracellular nitric oxide. Nitrosylates the active site Cys of CASP3 in response to nitric oxide (NO), and thereby inhibits caspase-3 activity. Induces the FOS/JUN AP-1 DNA binding activity in ionizing radiation (IR) cells through its oxidation/reduction status and stimulates AP-1 transcriptional activity. The sequence is that of Thioredoxin (TXN) from Sus scrofa (Pig).